The following is a 37-amino-acid chain: Photosystem II reaction center protein T (37 aa).

The helical transmembrane segment at 3–23 (ALVYTFLLVSTLGILFFAIFF) threads the bilayer.

It belongs to the PsbT family. As to quaternary structure, PSII is composed of 1 copy each of membrane proteins PsbA, PsbB, PsbC, PsbD, PsbE, PsbF, PsbH, PsbI, PsbJ, PsbK, PsbL, PsbM, PsbT, PsbY, PsbZ, Psb30/Ycf12, at least 3 peripheral proteins of the oxygen-evolving complex and a large number of cofactors. It forms dimeric complexes.

The protein resides in the plastid. Its subcellular location is the chloroplast thylakoid membrane. Its function is as follows. Found at the monomer-monomer interface of the photosystem II (PS II) dimer, plays a role in assembly and dimerization of PSII. PSII is a light-driven water plastoquinone oxidoreductase, using light energy to abstract electrons from H(2)O, generating a proton gradient subsequently used for ATP formation. The protein is Photosystem II reaction center protein T of Ephedra sinica (Chinese ephedra).